A 380-amino-acid chain; its full sequence is Sterol 24-C-methyltransferase ERG6B (380 aa).

Belongs to the class I-like SAM-binding methyltransferase superfamily. Erg6/SMT family.

It catalyses the reaction lanosterol + S-adenosyl-L-methionine = eburicol + S-adenosyl-L-homocysteine + H(+). The protein operates within steroid metabolism; ergosterol biosynthesis. In terms of biological role, sterol 24-C-methyltransferase; part of the third module of ergosterol biosynthesis pathway that includes the late steps of the pathway. ERG6A and ERG6B methylate lanosterol at C-24 to produce eburicol. The third module or late pathway involves the ergosterol synthesis itself through consecutive reactions that mainly occur in the endoplasmic reticulum (ER) membrane. Firstly, the squalene synthase ERG9 catalyzes the condensation of 2 farnesyl pyrophosphate moieties to form squalene, which is the precursor of all steroids. Squalene synthase is crucial for balancing the incorporation of farnesyl diphosphate (FPP) into sterol and nonsterol isoprene synthesis. Secondly, squalene is converted into lanosterol by the consecutive action of the squalene epoxidase ERG1 and the lanosterol synthase ERG7. Then, the delta(24)-sterol C-methyltransferase ERG6 methylates lanosterol at C-24 to produce eburicol. Eburicol is the substrate of the sterol 14-alpha demethylase encoded by CYP51A, CYP51B and CYP51C, to yield 4,4,24-trimethyl ergosta-8,14,24(28)-trienol. CYP51B encodes the enzyme primarily responsible for sterol 14-alpha-demethylation, and plays an essential role in ascospore formation. CYP51A encodes an additional sterol 14-alpha-demethylase, induced on ergosterol depletion and responsible for the intrinsic variation in azole sensitivity. The third CYP51 isoform, CYP51C, does not encode a sterol 14-alpha-demethylase, but is required for full virulence on host wheat ears. The C-14 reductase ERG24 then reduces the C14=C15 double bond which leads to 4,4-dimethylfecosterol. A sequence of further demethylations at C-4, involving the C-4 demethylation complex containing the C-4 methylsterol oxidases ERG25, the sterol-4-alpha-carboxylate 3-dehydrogenase ERG26 and the 3-keto-steroid reductase ERG27, leads to the production of fecosterol via 4-methylfecosterol. ERG28 has a role as a scaffold to help anchor ERG25, ERG26 and ERG27 to the endoplasmic reticulum. The C-8 sterol isomerase ERG2 then catalyzes the reaction which results in unsaturation at C-7 in the B ring of sterols and thus converts fecosterol to episterol. The sterol-C5-desaturases ERG3A and ERG3BB then catalyze the introduction of a C-5 double bond in the B ring to produce 5-dehydroepisterol. The C-22 sterol desaturases ERG5A and ERG5B further convert 5-dehydroepisterol into ergosta-5,7,22,24(28)-tetraen-3beta-ol by forming the C-22(23) double bond in the sterol side chain. Finally, ergosta-5,7,22,24(28)-tetraen-3beta-ol is substrate of the C-24(28) sterol reductase ERG4 to produce ergosterol. The chain is Sterol 24-C-methyltransferase ERG6B from Gibberella zeae (strain ATCC MYA-4620 / CBS 123657 / FGSC 9075 / NRRL 31084 / PH-1) (Wheat head blight fungus).